The sequence spans 80 residues: Large ribosomal subunit protein bL31B (80 aa).

Belongs to the bacterial ribosomal protein bL31 family. Type B subfamily. Part of the 50S ribosomal subunit.

This is Large ribosomal subunit protein bL31B from Streptococcus thermophilus (strain CNRZ 1066).